The chain runs to 287 residues: Carbon monoxide dehydrogenase medium chain (287 aa).

An FAD-binding PCMH-type domain is found at 1–177 (MIPPRFEYHA…VEIRVPAFAQ (177 aa)). FAD contacts are provided by residues 32 to 36 (AGGHS) and 111 to 115 (TIGGD).

Dimer of heterotrimers. Each heterotrimer consists of a large, a medium and a small subunit. FAD is required as a cofactor.

It carries out the reaction CO + a quinone + H2O = a quinol + CO2. Catalyzes the oxidation of carbon monoxide to carbon dioxide. This is Carbon monoxide dehydrogenase medium chain (cutM) from Hydrogenophaga pseudoflava (Pseudomonas carboxydoflava).